A 334-amino-acid polypeptide reads, in one-letter code: S-adenosylmethionine decarboxylase proenzyme (334 aa).

Residue Phe7 coordinates substrate. Catalysis depends on residues Glu8 and Glu11. Glu67 provides a ligand contact to substrate. The active-site Schiff-base intermediate with substrate; via pyruvic acid is the Ser68. Ser68 carries the post-translational modification Pyruvic acid (Ser); by autocatalysis. Cys82 functions as the Proton donor; for catalytic activity in the catalytic mechanism. Phe223 contacts substrate. Residues Ser229 and His243 each act as proton acceptor; for processing activity in the active site. Glu247 serves as a coordination point for substrate. At Ser298 the chain carries Phosphoserine.

This sequence belongs to the eukaryotic AdoMetDC family. As to quaternary structure, heterotetramer of two alpha and two beta chains. It depends on pyruvate as a cofactor. Is synthesized initially as an inactive proenzyme. Formation of the active enzyme involves a self-maturation process in which the active site pyruvoyl group is generated from an internal serine residue via an autocatalytic post-translational modification. Two non-identical subunits are generated from the proenzyme in this reaction, and the pyruvate is formed at the N-terminus of the alpha chain, which is derived from the carboxyl end of the proenzyme. The post-translation cleavage follows an unusual pathway, termed non-hydrolytic serinolysis, in which the side chain hydroxyl group of the serine supplies its oxygen atom to form the C-terminus of the beta chain, while the remainder of the serine residue undergoes an oxidative deamination to produce ammonia and the pyruvoyl group blocking the N-terminus of the alpha chain.

The catalysed reaction is S-adenosyl-L-methionine + H(+) = S-adenosyl 3-(methylsulfanyl)propylamine + CO2. Its pathway is amine and polyamine biosynthesis; S-adenosylmethioninamine biosynthesis; S-adenosylmethioninamine from S-adenosyl-L-methionine: step 1/1. In terms of biological role, essential for biosynthesis of the polyamines spermidine and spermine. Promotes maintenance and self-renewal of embryonic stem cells, by maintaining spermine levels. The sequence is that of S-adenosylmethionine decarboxylase proenzyme (AMD1) from Bos taurus (Bovine).